Reading from the N-terminus, the 241-residue chain is Probable histone-lysine N-methyltransferase set-23 (241 aa).

The Pre-SET domain occupies 25–85 (QGCDCETQCS…SCRNKVVQNG (61 aa)). Residues C27, C29, C33, C39, C41, C64, C68, C70, and C77 each coordinate Zn(2+). Residues 88–210 (KKLKIFSTSE…VGEELSYDYG (123 aa)) form the SET domain. Residues 98 to 100 (KGD), D138, Y140, R167, and 170 to 171 (NH) contribute to the S-adenosyl-L-methionine site. Positions 173, 222, 224, and 229 each coordinate Zn(2+). The Post-SET domain maps to 218–234 (NRKLCLCRSENCRKYLP).

Belongs to the class V-like SAM-binding methyltransferase superfamily. Histone-lysine methyltransferase family. Suvar3-9 subfamily.

It is found in the nucleus. The protein resides in the chromosome. The enzyme catalyses L-lysyl-[histone] + S-adenosyl-L-methionine = N(6)-methyl-L-lysyl-[histone] + S-adenosyl-L-homocysteine + H(+). Probable histone methyltransferase required for embryonic development. The sequence is that of Probable histone-lysine N-methyltransferase set-23 from Caenorhabditis briggsae.